Consider the following 81-residue polypeptide: Cytotoxin 1 (81 aa).

An N-terminal signal peptide occupies residues 1–21; that stretch reads MKTLLLTLVVVTIVCLDLGYT. Intrachain disulfides connect Cys-24–Cys-42, Cys-35–Cys-59, Cys-63–Cys-74, and Cys-75–Cys-80.

Belongs to the three-finger toxin family. Short-chain subfamily. Type IA cytotoxin sub-subfamily. In terms of assembly, monomer in solution; homodimer and oligomer in the presence of negatively charged lipids forming a pore with a size ranging between 20 and 30 Angstroms. Expressed by the venom gland.

Its subcellular location is the secreted. It is found in the target cell membrane. In terms of biological role, shows cytolytic activity on many different cells by forming pores in lipid membranes. Exhibits concentration-dependent growth inhibitory effects in the lung cell lines A549 (IC(50)= 0.88) and NL20 (IC(50)= 1.91), in the prostate cell lines PC-3 (IC(50)= 3.13 ug/ml) and RWPE-1 (IC(50)=0.35 ug/ml), and in the breast cell lines MCF-7 (IC(50)= 9.10 ug/ml) and 184B5 (IC(50)=6.21 ug/ml), with high selectivity for the lung cancer cell line A549 (selectivity index=2.17). Induces primarily necrosis in the A549 lung cancer cell line, and mainly caspase-independent late apoptosis in the breast cancer cells line MCF-7 and in the prostate cancer cell line PC-3. The polypeptide is Cytotoxin 1 (Naja sumatrana (Equatorial spitting cobra)).